Reading from the N-terminus, the 286-residue chain is NH(3)-dependent NAD(+) synthetase (286 aa).

51 to 58 (GISGGVDS) is an ATP binding site. D57 provides a ligand contact to Mg(2+). Deamido-NAD(+) is bound at residue R148. T168 contacts ATP. A Mg(2+)-binding site is contributed by E173. Deamido-NAD(+)-binding residues include K181 and D188. The ATP site is built by K197 and T219. Deamido-NAD(+) is bound at residue 268-269 (HK).

This sequence belongs to the NAD synthetase family. Homodimer.

The enzyme catalyses deamido-NAD(+) + NH4(+) + ATP = AMP + diphosphate + NAD(+) + H(+). The protein operates within cofactor biosynthesis; NAD(+) biosynthesis; NAD(+) from deamido-NAD(+) (ammonia route): step 1/1. Its function is as follows. Catalyzes the ATP-dependent amidation of deamido-NAD to form NAD. Uses ammonia as a nitrogen source. This is NH(3)-dependent NAD(+) synthetase from Paraburkholderia phytofirmans (strain DSM 17436 / LMG 22146 / PsJN) (Burkholderia phytofirmans).